A 186-amino-acid polypeptide reads, in one-letter code: Tetratricopeptide repeat protein 36 (186 aa).

3 TPR repeats span residues 48 to 81 (SKAL…LPDR), 83 to 115 (SAYN…SGGR), and 120 to 153 (RQSF…GSPF).

It belongs to the TTC36 family.

In Mus musculus (Mouse), this protein is Tetratricopeptide repeat protein 36 (Ttc36).